We begin with the raw amino-acid sequence, 348 residues long: Erythronate-4-phosphate dehydrogenase (348 aa).

Threonine 46 and threonine 67 together coordinate substrate. Residue aspartate 147 participates in NAD(+) binding. Arginine 209 is a catalytic residue. Residue aspartate 233 coordinates NAD(+). Glutamate 238 is a catalytic residue. The active-site Proton donor is histidine 255. Residue glycine 258 coordinates NAD(+). Residue tyrosine 259 coordinates substrate.

The protein belongs to the D-isomer specific 2-hydroxyacid dehydrogenase family. PdxB subfamily. In terms of assembly, homodimer.

Its subcellular location is the cytoplasm. The catalysed reaction is 4-phospho-D-erythronate + NAD(+) = (R)-3-hydroxy-2-oxo-4-phosphooxybutanoate + NADH + H(+). The protein operates within cofactor biosynthesis; pyridoxine 5'-phosphate biosynthesis; pyridoxine 5'-phosphate from D-erythrose 4-phosphate: step 2/5. In terms of biological role, catalyzes the oxidation of erythronate-4-phosphate to 3-hydroxy-2-oxo-4-phosphonooxybutanoate. The chain is Erythronate-4-phosphate dehydrogenase from Bacteroides fragilis (strain YCH46).